Reading from the N-terminus, the 1306-residue chain is Kinesin-like protein KIN-14L (1306 aa).

A Kinesin motor domain is found at 142-456 (NVKVFCRSRP…LSFSARAKNA (315 aa)). Residue 223-230 (GQSRSGKT) participates in ATP binding. 2 coiled-coil regions span residues 466–507 (IKKW…ANDQ) and 540–595 (HRIE…ALNS). Composition is skewed to polar residues over residues 592–611 (ALNS…SVIS) and 660–677 (LGSS…TNAQ). Disordered regions lie at residues 592–627 (ALNS…SVTK), 657–710 (KSGL…SGAI), and 849–881 (KSHT…RTSL). A compositionally biased stretch (low complexity) spans 855-867 (SRSSSRGSSPGRS).

The protein belongs to the TRAFAC class myosin-kinesin ATPase superfamily. Kinesin family. KIN-14 subfamily.

This is Kinesin-like protein KIN-14L from Oryza sativa subsp. japonica (Rice).